The sequence spans 522 residues: Aspartic and glutamic acid-rich protein (522 aa).

The signal sequence occupies residues 1–16 (MKVFVYLLVTFSLTNA). 2 stretches are compositionally biased toward basic and acidic residues: residues 72-81 (YDDFFPKDTS) and 93-102 (SRNDDGYDLA). The tract at residues 72–497 (YDDFFPKDTS…KSKDAAQGNI (426 aa)) is disordered. Residues 109–125 (DDEEAYDDFDEVDDRAD) show a composition bias toward acidic residues. The span at 142 to 152 (KLPAEEESKND) shows a compositional bias: basic and acidic residues. 4 stretches are compositionally biased toward acidic residues: residues 153-166 (MDEETFEDEPEEDK), 173-200 (FAEDERADEREDDDADFDFNDEEDEDEV), 228-261 (DNEEEYADESDDEAEEDSEETADDFEDDPEDESD), and 267-283 (EVEDESEENYQDDTEEG). Over residues 284–343 (SEIKQNDETEEQPEKKFDADKEHEDAPEPLKEKLSDESKARAEDESDKSEDAAKEIKEPE) the composition is skewed to basic and acidic residues. Residues 319–465 (DESKARAEDE…KSNLALKRDE (147 aa)) are a coiled coil. The segment covering 358–374 (DEAELLDDEAELSDDEA) has biased composition (acidic residues). 3 stretches are compositionally biased toward basic and acidic residues: residues 375 to 397 (ELSKDEAEQSSDEAEKSEDKAEK), 407 to 453 (DEAK…EFAK), and 461 to 491 (LKRDENRPLAKGLRESAAHLRDFPSEKKSKD).

Component of the acid-soluble organic matrix of the aragonitic skeleton (at protein level).

It is found in the secreted. This Acropora millepora (Staghorn coral) protein is Aspartic and glutamic acid-rich protein.